We begin with the raw amino-acid sequence, 172 residues long: Acidic proline-rich protein PRP25 (172 aa).

A signal peptide spans Met1–Ala16. Residues Glu22–Pro172 are disordered. Over residues Gln32 to Pro44 the composition is skewed to pro residues. Over residues Gly57 to Lys67 the composition is skewed to low complexity. 2 stretches are compositionally biased toward pro residues: residues Pro68–Lys137 and Gln145–Pro172.

The protein localises to the secreted. The polypeptide is Acidic proline-rich protein PRP25 (Rattus norvegicus (Rat)).